We begin with the raw amino-acid sequence, 562 residues long: Calmodulin-binding protein 60 F (562 aa).

The disordered stretch occupies residues Met1–Glu22. The segment at Met5 to Lys84 is calmodulin-binding. Residues His12–Glu22 are compositionally biased toward basic and acidic residues. Residues Glu154–Asn273 form a DNA-binding region.

It belongs to the plant ACBP60 protein family. As to quaternary structure, interacts with calmodulin (CaM).

Its subcellular location is the nucleus. Functionally, transcription activator that binds DNA in a sequence-specific manner, likely 5'-GAAATTTTGG-3', to promote the expression of target genes. The polypeptide is Calmodulin-binding protein 60 F (Arabidopsis thaliana (Mouse-ear cress)).